We begin with the raw amino-acid sequence, 700 residues long: Long chain acyl-CoA synthetase 7, peroxisomal (700 aa).

Residues 1–29 (MEFASPEQRRLETIRSHIDTSPTNDQSSS) are disordered. Positions 7–18 (EQRRLETIRSHI) are enriched in basic and acidic residues. The Microbody targeting signal motif lies at 10–18 (RLETIRSHI). The span at 19–29 (DTSPTNDQSSS) shows a compositional bias: polar residues. An ATP-binding site is contributed by 266–277 (ICYTSGTTGTPK). The segment at 526-550 (DGWLHTGDIGLWLPGGRLKIIDRKK) is fatty acid-binding. A Microbody targeting signal motif is present at residues 698-700 (SKL).

It belongs to the ATP-dependent AMP-binding enzyme family. As to quaternary structure, interacts with PEX5. It depends on Mg(2+) as a cofactor. Expressed in roots, stems, leaves flowers and germinating seedling. Preferentially expressed in seeds.

It is found in the peroxisome. It carries out the reaction a long-chain fatty acid + ATP + CoA = a long-chain fatty acyl-CoA + AMP + diphosphate. The catalysed reaction is decanoate + ATP + CoA = decanoyl-CoA + AMP + diphosphate. The enzyme catalyses dodecanoate + ATP + CoA = dodecanoyl-CoA + AMP + diphosphate. It catalyses the reaction tetradecanoate + ATP + CoA = tetradecanoyl-CoA + AMP + diphosphate. It carries out the reaction hexadecanoate + ATP + CoA = hexadecanoyl-CoA + AMP + diphosphate. The catalysed reaction is (9Z)-octadecenoate + ATP + CoA = (9Z)-octadecenoyl-CoA + AMP + diphosphate. The enzyme catalyses (9Z,12Z)-octadecadienoate + ATP + CoA = (9Z,12Z)-octadecadienoyl-CoA + AMP + diphosphate. It catalyses the reaction (9Z,12Z,15Z)-octadecatrienoate + ATP + CoA = (9Z,12Z,15Z)-octadecatrienoyl-CoA + AMP + diphosphate. It participates in lipid metabolism; fatty acid metabolism. Functionally, activation of long-chain fatty acids for both synthesis of cellular lipids, and degradation via beta-oxidation. Preferentially uses palmitate, palmitoleate, oleate, linoleate and eicosenoate as substrates. Can use myristate and linolenate as substrates. Functions redundantly with LACS6 in lipid mobilization for beta-oxidation during seed germination, which is essential for postgerminative growth and seedling establishment. In Arabidopsis thaliana (Mouse-ear cress), this protein is Long chain acyl-CoA synthetase 7, peroxisomal.